Consider the following 529-residue polypeptide: Bifunctional purine biosynthesis protein PurH (529 aa).

Positions 1 to 148 (MQQRRPVRRA…KNHKDVAIVV (148 aa)) constitute an MGS-like domain. Lysine 287 is subject to N6-acetyllysine.

The protein belongs to the PurH family.

It catalyses the reaction (6R)-10-formyltetrahydrofolate + 5-amino-1-(5-phospho-beta-D-ribosyl)imidazole-4-carboxamide = 5-formamido-1-(5-phospho-D-ribosyl)imidazole-4-carboxamide + (6S)-5,6,7,8-tetrahydrofolate. The enzyme catalyses IMP + H2O = 5-formamido-1-(5-phospho-D-ribosyl)imidazole-4-carboxamide. The protein operates within purine metabolism; IMP biosynthesis via de novo pathway; 5-formamido-1-(5-phospho-D-ribosyl)imidazole-4-carboxamide from 5-amino-1-(5-phospho-D-ribosyl)imidazole-4-carboxamide (10-formyl THF route): step 1/1. Its pathway is purine metabolism; IMP biosynthesis via de novo pathway; IMP from 5-formamido-1-(5-phospho-D-ribosyl)imidazole-4-carboxamide: step 1/1. The sequence is that of Bifunctional purine biosynthesis protein PurH from Escherichia coli O17:K52:H18 (strain UMN026 / ExPEC).